We begin with the raw amino-acid sequence, 890 residues long: Translation initiation factor IF-2 (890 aa).

The disordered stretch occupies residues 45-304 (LIDHLNQKNS…LQQGFQKPAQ (260 aa)). The span at 67–81 (STLNIPGTGGKSKSV) shows a compositional bias: polar residues. Over residues 92-217 (VKRDPQEAER…RMAEENKWTD (126 aa)) the composition is skewed to basic and acidic residues. The segment covering 252-266 (GRGRNAKAARPKKGN) has biased composition (basic residues). A compositionally biased stretch (basic and acidic residues) spans 267-280 (KHSESKADREEARA). The tr-type G domain occupies 389–558 (PRAPVVTIMG…LLQAEVLELK (170 aa)). The G1 stretch occupies residues 398 to 405 (GHVDHGKT). 398–405 (GHVDHGKT) contacts GTP. Residues 423-427 (GITQH) are G2. Residues 444 to 447 (DTPG) form a G3 region. Residues 444 to 448 (DTPGH) and 498 to 501 (NKID) each bind GTP. The G4 stretch occupies residues 498-501 (NKID). The tract at residues 534–536 (SAK) is G5. The residue at position 808 (Lys-808) is an N6-acetyllysine.

It belongs to the TRAFAC class translation factor GTPase superfamily. Classic translation factor GTPase family. IF-2 subfamily.

It localises to the cytoplasm. Functionally, one of the essential components for the initiation of protein synthesis. Protects formylmethionyl-tRNA from spontaneous hydrolysis and promotes its binding to the 30S ribosomal subunits. Also involved in the hydrolysis of GTP during the formation of the 70S ribosomal complex. The protein is Translation initiation factor IF-2 of Escherichia fergusonii (strain ATCC 35469 / DSM 13698 / CCUG 18766 / IAM 14443 / JCM 21226 / LMG 7866 / NBRC 102419 / NCTC 12128 / CDC 0568-73).